The following is a 652-amino-acid chain: Probable L-type lectin-domain containing receptor kinase S.5 (652 aa).

The N-terminal stretch at 1-20 (MRFSLAWKLLFLILTCKIET) is a signal peptide. Residues 21 to 266 (QVKCLKFDFP…EGLKIDGDGN (246 aa)) are Extracellular-facing. The legume-lectin like stretch occupies residues 24–257 (CLKFDFPGFN…LNCVRSWSFE (234 aa)). N-linked (GlcNAc...) asparagine glycans are attached at residues asparagine 33, asparagine 91, asparagine 97, asparagine 100, asparagine 122, asparagine 139, asparagine 201, and asparagine 244. Residues 267–287 (MLWLWITIPIVFIVGIGAFLG) form a helical membrane-spanning segment. Residues 288–652 (ALYLRSRSKA…INSLTELTGR (365 aa)) are Cytoplasmic-facing. Positions 330 to 622 (FGAENKLGQG…PDVPTERPAF (293 aa)) constitute a Protein kinase domain. ATP contacts are provided by residues 336 to 344 (LGQGGFGMV) and lysine 357. Residue aspartate 455 is the Proton acceptor of the active site.

It in the C-terminal section; belongs to the protein kinase superfamily. Ser/Thr protein kinase family. In the N-terminal section; belongs to the leguminous lectin family.

The protein localises to the cell membrane. The enzyme catalyses L-seryl-[protein] + ATP = O-phospho-L-seryl-[protein] + ADP + H(+). It catalyses the reaction L-threonyl-[protein] + ATP = O-phospho-L-threonyl-[protein] + ADP + H(+). This is Probable L-type lectin-domain containing receptor kinase S.5 (LECRKS5) from Arabidopsis thaliana (Mouse-ear cress).